Consider the following 349-residue polypeptide: Alanine racemase (349 aa).

Lysine 35 functions as the Proton acceptor; specific for D-alanine in the catalytic mechanism. Lysine 35 carries the N6-(pyridoxal phosphate)lysine modification. Arginine 130 is a binding site for substrate. The active-site Proton acceptor; specific for L-alanine is tyrosine 244. Methionine 292 is a binding site for substrate.

Belongs to the alanine racemase family. The cofactor is pyridoxal 5'-phosphate.

The enzyme catalyses L-alanine = D-alanine. The protein operates within amino-acid biosynthesis; D-alanine biosynthesis; D-alanine from L-alanine: step 1/1. Catalyzes the interconversion of L-alanine and D-alanine. May also act on other amino acids. The sequence is that of Alanine racemase (alr) from Cereibacter sphaeroides (strain ATCC 17023 / DSM 158 / JCM 6121 / CCUG 31486 / LMG 2827 / NBRC 12203 / NCIMB 8253 / ATH 2.4.1.) (Rhodobacter sphaeroides).